Reading from the N-terminus, the 2174-residue chain is Spectinabilin polyketide synthase system protein NorB (2174 aa).

The region spanning 34–459 (REPVAVVAMG…GTNAHVILEQ (426 aa)) is the Ketosynthase family 3 (KS3) domain. Active-site for beta-ketoacyl synthase activity residues include C206, H341, and H381. Positions 567–888 (FLFSGQGSQR…AAVSRAFVQG (322 aa)) constitute a Malonyl-CoA:ACP transacylase (MAT) domain. Residues 938-1060 (HPLLGACLEL…GQLAPEAAAP (123 aa)) form an N-terminal hotdog fold region. One can recognise a PKS/mFAS DH domain in the interval 938 to 1212 (HPLLGACLEL…TRPITAGQLR (275 aa)). H970 serves as the catalytic Proton acceptor; for dehydratase activity. The tract at residues 1056–1075 (EAAAPPAAPGEDWPPPGAEP) is disordered. Pro residues predominate over residues 1061 to 1074 (PAAPGEDWPPPGAE). A C-terminal hotdog fold region spans residues 1073–1212 (AEPVPLEGFY…TRPITAGQLR (140 aa)). D1134 functions as the Proton donor; for dehydratase activity in the catalytic mechanism. In terms of domain architecture, Enoyl reductase (ER) spans 1424–1726 (GTVDDLVLAP…QARNVGKLVL (303 aa)). In terms of domain architecture, Ketoreductase (KR) spans 1736–1915 (GTILVTGGYG…ATALAWGMWA (180 aa)). Residues 2017–2092 (PAVRELVRGQ…ALTDAIEARL (76 aa)) form the Carrier domain. O-(pantetheine 4'-phosphoryl)serine is present on S2052.

The spectinabilin polyketide synthase complex is composed of 4 proteins, NorA, NorA', NorB and NorC. The complex comprises 6 modules with a total of 28 catalytic domains catalyzing 7 chain elongations. NorA comprises one module, NorA' two modules, NorB one module and NorC two modules. The cofactor is pantetheine 4'-phosphate.

It catalyses the reaction 4-nitrobenzoyl-CoA + 6 (S)-methylmalonyl-CoA + malonyl-CoA + 6 NADPH + 12 H(+) = demethyldeoxyspectinabilin + 7 CO2 + 6 NADP(+) + 8 CoA + 5 H2O. It functions in the pathway antibiotic biosynthesis. Its pathway is polyketide biosynthesis. Component of a type I modular polyketide synthase (PKS) that generates the backbone of the antibiotic spectinabilin (also known as neoaureothin), a nitroaryl-substituted polyketide metabolite. This PKS system accepts the unusual starter unit 4-nitrobenzoyl-CoA and extends it by 6 molecules of (S)-methylmalonyl-CoA and a single molecule of malonyl-CoA. The sequence is that of Spectinabilin polyketide synthase system protein NorB from Streptomyces orinoci (Streptoverticillium orinoci).